Consider the following 286-residue polypeptide: Meteorin-like protein (286 aa).

Residues 1–21 (MLSPFLAYLLSVVLLCRIARS) form the signal peptide. 5 disulfide bridges follow: Cys28/Cys51, Cys84/Cys120, Cys165/Cys235, Cys168/Cys259, and Cys178/Cys281.

The protein belongs to the meteorin family.

The protein resides in the secreted. In terms of biological role, hormone induced following exercise or cold exposure that promotes energy expenditure. Induced either in the skeletal muscle after exercise or in adipose tissue following cold exposure and is present in the circulation. Able to stimulate energy expenditure associated with the browning of the white fat depots and improves glucose tolerance. This Danio rerio (Zebrafish) protein is Meteorin-like protein (metrnl).